The primary structure comprises 135 residues: M-zodatoxin-Lt8q (135 aa).

Residues 1–20 (MKYFVVALALVAAFACIAES) form the signal peptide. The propeptide occupies 21–60 (KPAESEHELAEVEEENELADLEDAVWLEHLADLSDLEEAR).

Belongs to the cationic peptide 06 (cytoinsectotoxin) family. In terms of tissue distribution, expressed by the venom gland.

The protein localises to the secreted. Insecticidal, cytolytic and antimicrobial peptide. Forms voltage-dependent, ion-permeable channels in membranes. At high concentration causes cell membrane lysis. The polypeptide is M-zodatoxin-Lt8q (cit 1-16) (Lachesana tarabaevi (Spider)).